We begin with the raw amino-acid sequence, 87 residues long: Small ribosomal subunit protein uS17 (87 aa).

Belongs to the universal ribosomal protein uS17 family. In terms of assembly, part of the 30S ribosomal subunit.

Its function is as follows. One of the primary rRNA binding proteins, it binds specifically to the 5'-end of 16S ribosomal RNA. This chain is Small ribosomal subunit protein uS17, found in Neisseria gonorrhoeae (strain ATCC 700825 / FA 1090).